We begin with the raw amino-acid sequence, 138 residues long: ATP synthase epsilon chain (138 aa).

Belongs to the ATPase epsilon chain family. In terms of assembly, F-type ATPases have 2 components, CF(1) - the catalytic core - and CF(0) - the membrane proton channel. CF(1) has five subunits: alpha(3), beta(3), gamma(1), delta(1), epsilon(1). CF(0) has three main subunits: a, b and c.

It is found in the cellular thylakoid membrane. In terms of biological role, produces ATP from ADP in the presence of a proton gradient across the membrane. The polypeptide is ATP synthase epsilon chain (atpC) (Synechococcus sp. (strain PCC 6716)).